The following is a 447-amino-acid chain: UPF0210 protein LEUM_1180 (447 aa).

It belongs to the UPF0210 family. In terms of assembly, homodimer.

The protein is UPF0210 protein LEUM_1180 of Leuconostoc mesenteroides subsp. mesenteroides (strain ATCC 8293 / DSM 20343 / BCRC 11652 / CCM 1803 / JCM 6124 / NCDO 523 / NBRC 100496 / NCIMB 8023 / NCTC 12954 / NRRL B-1118 / 37Y).